Reading from the N-terminus, the 141-residue chain is Large ribosomal subunit protein uL11 (141 aa).

Belongs to the universal ribosomal protein uL11 family. In terms of assembly, part of the ribosomal stalk of the 50S ribosomal subunit. Interacts with L10 and the large rRNA to form the base of the stalk. L10 forms an elongated spine to which L12 dimers bind in a sequential fashion forming a multimeric L10(L12)X complex. In terms of processing, one or more lysine residues are methylated.

Forms part of the ribosomal stalk which helps the ribosome interact with GTP-bound translation factors. This is Large ribosomal subunit protein uL11 from Synechococcus sp. (strain WH7803).